Consider the following 387-residue polypeptide: 1-deoxy-D-xylulose 5-phosphate reductoisomerase (387 aa).

NADPH-binding residues include threonine 10, glycine 11, serine 12, isoleucine 13, glycine 36, asparagine 38, and asparagine 122. Lysine 123 provides a ligand contact to 1-deoxy-D-xylulose 5-phosphate. Glutamate 124 serves as a coordination point for NADPH. Aspartate 148 provides a ligand contact to Mn(2+). 1-deoxy-D-xylulose 5-phosphate is bound by residues serine 149, glutamate 150, serine 174, and histidine 197. Residue glutamate 150 coordinates Mn(2+). Glycine 203 serves as a coordination point for NADPH. Positions 210, 215, 216, and 219 each coordinate 1-deoxy-D-xylulose 5-phosphate. Residue glutamate 219 participates in Mn(2+) binding.

It belongs to the DXR family. It depends on Mg(2+) as a cofactor. Mn(2+) serves as cofactor.

It carries out the reaction 2-C-methyl-D-erythritol 4-phosphate + NADP(+) = 1-deoxy-D-xylulose 5-phosphate + NADPH + H(+). It participates in isoprenoid biosynthesis; isopentenyl diphosphate biosynthesis via DXP pathway; isopentenyl diphosphate from 1-deoxy-D-xylulose 5-phosphate: step 1/6. Catalyzes the NADPH-dependent rearrangement and reduction of 1-deoxy-D-xylulose-5-phosphate (DXP) to 2-C-methyl-D-erythritol 4-phosphate (MEP). This Chloroherpeton thalassium (strain ATCC 35110 / GB-78) protein is 1-deoxy-D-xylulose 5-phosphate reductoisomerase.